The primary structure comprises 445 residues: Tubulin beta-2 chain (445 aa).

GTP is bound by residues Q11, E69, S138, G142, T143, G144, N204, and N226. Position 69 (E69) interacts with Mg(2+). Residues 424–445 form a disordered region; that stretch reads QYQDATAEDEGEFDEDEEVEEA. The segment covering 429–445 has biased composition (acidic residues); sequence TAEDEGEFDEDEEVEEA.

This sequence belongs to the tubulin family. As to quaternary structure, dimer of alpha and beta chains. A typical microtubule is a hollow water-filled tube with an outer diameter of 25 nm and an inner diameter of 15 nM. Alpha-beta heterodimers associate head-to-tail to form protofilaments running lengthwise along the microtubule wall with the beta-tubulin subunit facing the microtubule plus end conferring a structural polarity. Microtubules usually have 13 protofilaments but different protofilament numbers can be found in some organisms and specialized cells. Mg(2+) serves as cofactor.

It localises to the cytoplasm. The protein resides in the cytoskeleton. Functionally, tubulin is the major constituent of microtubules, a cylinder consisting of laterally associated linear protofilaments composed of alpha- and beta-tubulin heterodimers. Microtubules grow by the addition of GTP-tubulin dimers to the microtubule end, where a stabilizing cap forms. Below the cap, tubulin dimers are in GDP-bound state, owing to GTPase activity of alpha-tubulin. This is Tubulin beta-2 chain (TUB-2) from Echinococcus multilocularis (Fox tapeworm).